A 430-amino-acid chain; its full sequence is Serine--tRNA ligase (430 aa).

Residue threonine 237–glutamate 239 participates in L-serine binding. Arginine 268–glutamate 270 serves as a coordination point for ATP. Glutamate 291 is a binding site for L-serine. Residue glutamate 355–serine 358 participates in ATP binding. Serine 391 is a binding site for L-serine.

It belongs to the class-II aminoacyl-tRNA synthetase family. Type-1 seryl-tRNA synthetase subfamily. Homodimer. The tRNA molecule binds across the dimer.

The protein resides in the cytoplasm. The catalysed reaction is tRNA(Ser) + L-serine + ATP = L-seryl-tRNA(Ser) + AMP + diphosphate + H(+). It carries out the reaction tRNA(Sec) + L-serine + ATP = L-seryl-tRNA(Sec) + AMP + diphosphate + H(+). It participates in aminoacyl-tRNA biosynthesis; selenocysteinyl-tRNA(Sec) biosynthesis; L-seryl-tRNA(Sec) from L-serine and tRNA(Sec): step 1/1. In terms of biological role, catalyzes the attachment of serine to tRNA(Ser). Is also able to aminoacylate tRNA(Sec) with serine, to form the misacylated tRNA L-seryl-tRNA(Sec), which will be further converted into selenocysteinyl-tRNA(Sec). The chain is Serine--tRNA ligase from Shigella boydii serotype 18 (strain CDC 3083-94 / BS512).